A 127-amino-acid chain; its full sequence is Protein ApaG (127 aa).

The region spanning 3-127 (DADVYAISVE…FVLAIPRTLH (125 aa)) is the ApaG domain.

The polypeptide is Protein ApaG (Stenotrophomonas maltophilia (strain K279a)).